The following is a 308-amino-acid chain: Growth/differentiation factor 15 (308 aa).

The N-terminal stretch at 1 to 29 (MPGQELKTLNGSQMLLVLLVLLWPPHGGA) is a signal peptide. Positions 30–192 (VSLAEASRAS…HLRPRASRGR (163 aa)) are excised as a propeptide. Asparagine 70 carries N-linked (GlcNAc...) asparagine glycosylation. The tract at residues 152–179 (APALHLRLSPPPSQSDQLLVKSSSSRPQ) is disordered. Over residues 165 to 178 (QSDQLLVKSSSSRP) the composition is skewed to polar residues. Cystine bridges form between cysteine 203-cysteine 210, cysteine 211-cysteine 274, cysteine 240-cysteine 305, and cysteine 244-cysteine 307.

The protein belongs to the TGF-beta family. Homodimer; disulfide-linked. Interacts with GFRAL and RET; ligand of GFRAL, which mediates GDF15 internalization and cellular signaling through interaction with RET via the formation of a 2:2:2 ternary complex composed of GDF15, GFRAL and RET. As to expression, detected in plasma (at protein level).

The protein localises to the secreted. Hormone produced in response to various stresses to confer information about those stresses to the brain, and trigger an aversive response, characterized by nausea and/or loss of appetite. The aversive response is both required to reduce continuing exposure to those stresses at the time of exposure and to promote avoidance behavior in the future. Acts by binding to its receptor, GFRAL, activating GFRAL-expressing neurons localized in the area postrema and nucleus tractus solitarius of the brainstem. It then triggers the activation of neurons localized within the parabrachial nucleus and central amygdala, which constitutes part of the 'emergency circuit' that shapes responses to stressful conditions. The GDF15-GFRAL signal induces expression of genes involved in metabolism, such as lipid metabolism in adipose tissues. Required for avoidance behavior in response to food allergens: induced downstream of mast cell activation to promote aversion and minimize harmful effects of exposure to noxious substances. In addition to suppress appetite, also promotes weight loss by enhancing energy expenditure in muscle: acts by increasing calcium futile cycling in muscle. Contributes to the effect of metformin, an anti-diabetic drug, on appetite reduction and weight loss: produced in the kidney in response to metformin treatment, thereby activating the GDF15-GFRAL response, leading to reduced appetite and weight. Produced in response to anticancer drugs, such as camptothecin or cisplatin, promoting nausea and contributing to malnutrition. Overproduced in many cancers, promoting anorexia in cancer (cachexia). Responsible for the risk of nausea during pregnancy: high levels of GDF15 during pregnancy, mostly originating from embryos, are associated with increased nausea. Maternal sensitivity to nausea is probably determined by pre-pregnancy exposure to GDF15, females with naturally high level of GDF15 being less susceptible to nausea than females with low levels of GDF15 before pregnancy. Promotes metabolic adaptation in response to systemic inflammation caused by bacterial and viral infections in order to promote tissue tolerance and prevent tissue damage. Inhibits growth hormone signaling on hepatocytes. This chain is Growth/differentiation factor 15, found in Macaca fascicularis (Crab-eating macaque).